A 106-amino-acid chain; its full sequence is Small ribosomal subunit protein bS20 (106 aa).

Over residues 1 to 32 the composition is skewed to basic residues; sequence MAQKKPKRNLSALKRHRQSLKRRLRNKAKKSA. Residues 1–33 form a disordered region; the sequence is MAQKKPKRNLSALKRHRQSLKRRLRNKAKKSAI.

This sequence belongs to the bacterial ribosomal protein bS20 family.

In terms of biological role, binds directly to 16S ribosomal RNA. This chain is Small ribosomal subunit protein bS20 (rpsT), found in Thermus thermophilus (strain ATCC BAA-163 / DSM 7039 / HB27).